We begin with the raw amino-acid sequence, 1008 residues long: ATP-dependent zinc metalloprotease FTSH 12, chloroplastic (1008 aa).

The transit peptide at methionine 1–tyrosine 49 directs the protein to the chloroplast. The next 2 helical transmembrane spans lie at alanine 154–isoleucine 174 and isoleucine 427–isoleucine 447. Residue glycine 533–threonine 540 coordinates ATP. Histidine 769 is a binding site for Zn(2+). Residue glutamate 770 is part of the active site. Residues histidine 773 and aspartate 849 each coordinate Zn(2+).

This sequence in the N-terminal section; belongs to the AAA ATPase family. In the C-terminal section; belongs to the peptidase M41 family. Zn(2+) serves as cofactor.

The protein localises to the plastid. Its subcellular location is the chloroplast thylakoid membrane. Probable ATP-dependent zinc metallopeptidase. This is ATP-dependent zinc metalloprotease FTSH 12, chloroplastic (FTSH12) from Arabidopsis thaliana (Mouse-ear cress).